The primary structure comprises 310 residues: Methionyl-tRNA formyltransferase (310 aa).

114-117 (SLLP) lines the (6S)-5,6,7,8-tetrahydrofolate pocket.

The protein belongs to the Fmt family.

It carries out the reaction L-methionyl-tRNA(fMet) + (6R)-10-formyltetrahydrofolate = N-formyl-L-methionyl-tRNA(fMet) + (6S)-5,6,7,8-tetrahydrofolate + H(+). In terms of biological role, attaches a formyl group to the free amino group of methionyl-tRNA(fMet). The formyl group appears to play a dual role in the initiator identity of N-formylmethionyl-tRNA by promoting its recognition by IF2 and preventing the misappropriation of this tRNA by the elongation apparatus. The sequence is that of Methionyl-tRNA formyltransferase from Granulibacter bethesdensis (strain ATCC BAA-1260 / CGDNIH1).